The primary structure comprises 147 residues: Small ribosomal subunit protein bS18 (147 aa).

It belongs to the bacterial ribosomal protein bS18 family. As to quaternary structure, part of the 30S ribosomal subunit. Forms a tight heterodimer with protein bS6.

Functionally, binds as a heterodimer with protein bS6 to the central domain of the 16S rRNA, where it helps stabilize the platform of the 30S subunit. This chain is Small ribosomal subunit protein bS18, found in Dehalococcoides mccartyi (strain ATCC BAA-2100 / JCM 16839 / KCTC 5957 / BAV1).